A 382-amino-acid polypeptide reads, in one-letter code: 1-deoxy-D-xylulose 5-phosphate reductoisomerase (382 aa).

NADPH contacts are provided by Thr10, Gly11, Ser12, Ile13, Gly36, and Asn122. Lys123 lines the 1-deoxy-D-xylulose 5-phosphate pocket. Glu124 serves as a coordination point for NADPH. A Mn(2+)-binding site is contributed by Asp148. Residues Ser149, Glu150, Ser174, and His197 each contribute to the 1-deoxy-D-xylulose 5-phosphate site. Glu150 is a binding site for Mn(2+). An NADPH-binding site is contributed by Gly203. Residues Ser210, Asn215, Lys216, and Glu219 each contribute to the 1-deoxy-D-xylulose 5-phosphate site. Residue Glu219 participates in Mn(2+) binding.

It belongs to the DXR family. Mg(2+) serves as cofactor. It depends on Mn(2+) as a cofactor.

The catalysed reaction is 2-C-methyl-D-erythritol 4-phosphate + NADP(+) = 1-deoxy-D-xylulose 5-phosphate + NADPH + H(+). The protein operates within isoprenoid biosynthesis; isopentenyl diphosphate biosynthesis via DXP pathway; isopentenyl diphosphate from 1-deoxy-D-xylulose 5-phosphate: step 1/6. Catalyzes the NADPH-dependent rearrangement and reduction of 1-deoxy-D-xylulose-5-phosphate (DXP) to 2-C-methyl-D-erythritol 4-phosphate (MEP). This is 1-deoxy-D-xylulose 5-phosphate reductoisomerase from Chlorobaculum tepidum (strain ATCC 49652 / DSM 12025 / NBRC 103806 / TLS) (Chlorobium tepidum).